The chain runs to 70 residues: Cold shock-like protein CspH (70 aa).

The 61-residue stretch at 7 to 67 folds into the CSD domain; that stretch reads GIVKTFDRKS…GLRGPTAANV (61 aa).

It localises to the cytoplasm. In Escherichia coli O6:H1 (strain CFT073 / ATCC 700928 / UPEC), this protein is Cold shock-like protein CspH (cspH).